A 156-amino-acid polypeptide reads, in one-letter code: Transcriptional repressor NrdR (156 aa).

A zinc finger lies at 3–34 (CPYCGHLEDRVVDSRETQDGQATRRRRACLSC). In terms of domain architecture, ATP-cone spans 49–139 (PQVVKKDGRR…VYRAFRDVGE (91 aa)).

It belongs to the NrdR family. Zn(2+) serves as cofactor.

Negatively regulates transcription of bacterial ribonucleotide reductase nrd genes and operons by binding to NrdR-boxes. This is Transcriptional repressor NrdR from Anaeromyxobacter dehalogenans (strain 2CP-C).